The primary structure comprises 291 residues: Probable alpha-L-glutamate ligase (291 aa).

The ATP-grasp domain occupies 104 to 287; that stretch reads HQLLASQGID…VAGTIIQHLE (184 aa). Residues Lys-141, 178–179, Asp-187, and 211–213 contribute to the ATP site; these read EF and RSN. Mg(2+) contacts are provided by Asp-248, Glu-260, and Asn-262. Mn(2+) is bound by residues Asp-248, Glu-260, and Asn-262.

Belongs to the RimK family. Requires Mg(2+) as cofactor. It depends on Mn(2+) as a cofactor.

The chain is Probable alpha-L-glutamate ligase from Xanthomonas campestris pv. campestris (strain B100).